The sequence spans 268 residues: 4-diphosphocytidyl-2-C-methyl-D-erythritol kinase (268 aa).

Lys10 is an active-site residue. 101-111 lines the ATP pocket; the sequence is PTQAGLGGGST. Asp143 is a catalytic residue.

This sequence belongs to the GHMP kinase family. IspE subfamily.

The catalysed reaction is 4-CDP-2-C-methyl-D-erythritol + ATP = 4-CDP-2-C-methyl-D-erythritol 2-phosphate + ADP + H(+). It participates in isoprenoid biosynthesis; isopentenyl diphosphate biosynthesis via DXP pathway; isopentenyl diphosphate from 1-deoxy-D-xylulose 5-phosphate: step 3/6. Its function is as follows. Catalyzes the phosphorylation of the position 2 hydroxy group of 4-diphosphocytidyl-2C-methyl-D-erythritol. The chain is 4-diphosphocytidyl-2-C-methyl-D-erythritol kinase from Helicobacter acinonychis (strain Sheeba).